The sequence spans 344 residues: Meiotic recombination protein DMC1 homolog A (344 aa).

ATP is bound at residue 133-140 (GEFRSGKT). Arginine 235 contributes to the dsDNA binding site. SsDNA-binding residues include arginine 235, phenylalanine 238, arginine 241, arginine 247, and arginine 315. DsDNA is bound by residues arginine 241 and arginine 247.

It belongs to the RecA family. DMC1 subfamily. In terms of tissue distribution, expressed in pollen mother cells and root tips.

It localises to the nucleus. Recombinase that may participate in meiotic recombination, specifically in homologous strand assimilation, which is required for the resolution of meiotic double-strand breaks. Exhibits DNA-dependent ATPase activity when bound to single-stranded DNA (ssDNA). Mediates renaturation of homologous complementary strands as well as assimilation of single strands into homologous supercoiled duplexes leading to D-loop formation. Binds circular single-stranded DNA (ssDNA) and circular double-stranded DNA (dsDNA) in vitro. Catalyzes DNA homologous renaturation and DNA strand exchange. The rates of these activities are dependent on the state of ATP hydrolysis. Forms helical filaments along ssDNA and dsDNA, and promotes strand exchange between ssDNA and dsDNA with long DNA substrates of several thousand base pairs. The presence of the replication protein A is not required for this activity. Seems to be required for homologous pairing and subsequent chromosome segregation during male meiosis. May be not directly required for homologous pairing during male meiosis. Required for synaptonemal complex assembly and crossover formation. Functions redundantly with DMC1B. The polypeptide is Meiotic recombination protein DMC1 homolog A (Oryza sativa subsp. indica (Rice)).